We begin with the raw amino-acid sequence, 311 residues long: Methionyl-tRNA formyltransferase (311 aa).

109–112 (SLLP) provides a ligand contact to (6S)-5,6,7,8-tetrahydrofolate.

Belongs to the Fmt family.

It carries out the reaction L-methionyl-tRNA(fMet) + (6R)-10-formyltetrahydrofolate = N-formyl-L-methionyl-tRNA(fMet) + (6S)-5,6,7,8-tetrahydrofolate + H(+). In terms of biological role, attaches a formyl group to the free amino group of methionyl-tRNA(fMet). The formyl group appears to play a dual role in the initiator identity of N-formylmethionyl-tRNA by promoting its recognition by IF2 and preventing the misappropriation of this tRNA by the elongation apparatus. The sequence is that of Methionyl-tRNA formyltransferase from Staphylococcus aureus (strain bovine RF122 / ET3-1).